We begin with the raw amino-acid sequence, 393 residues long: S-adenosylmethionine synthase (393 aa).

His16 contributes to the ATP binding site. Asp18 is a Mg(2+) binding site. Glu44 is a K(+) binding site. L-methionine contacts are provided by Glu57 and Gln100. A flexible loop region spans residues 100 to 110; it reads QSPDIVMGVDG. Residues 165–167, 231–232, Asp240, 246–247, and Lys267 contribute to the ATP site; these read DAK, RF, and RK. L-methionine is bound at residue Asp240. Position 271 (Lys271) interacts with L-methionine.

Belongs to the AdoMet synthase family. As to quaternary structure, homotetramer; dimer of dimers. Mg(2+) is required as a cofactor. Requires K(+) as cofactor.

The protein localises to the cytoplasm. The catalysed reaction is L-methionine + ATP + H2O = S-adenosyl-L-methionine + phosphate + diphosphate. It participates in amino-acid biosynthesis; S-adenosyl-L-methionine biosynthesis; S-adenosyl-L-methionine from L-methionine: step 1/1. Catalyzes the formation of S-adenosylmethionine (AdoMet) from methionine and ATP. The overall synthetic reaction is composed of two sequential steps, AdoMet formation and the subsequent tripolyphosphate hydrolysis which occurs prior to release of AdoMet from the enzyme. The polypeptide is S-adenosylmethionine synthase (Coxiella burnetii (strain Dugway 5J108-111)).